Consider the following 566-residue polypeptide: Alpha-amylase (566 aa).

The first 28 residues, 1–28 (MARRLATASLAVLAAAATALTAPTPAAA), serve as a signal peptide directing secretion. Residues Asn-120, Gln-166, and Asp-175 each coordinate Ca(2+). The active-site Nucleophile is Asp-205. His-209 contacts Ca(2+). The Proton donor role is filled by Glu-232. In terms of domain architecture, CBM20 spans 465–566 (GPGTGQTSAS…ALTLNDTWRG (102 aa)).

This sequence belongs to the glycosyl hydrolase 13 family. In terms of assembly, monomer. Ca(2+) serves as cofactor.

The catalysed reaction is Endohydrolysis of (1-&gt;4)-alpha-D-glucosidic linkages in polysaccharides containing three or more (1-&gt;4)-alpha-linked D-glucose units.. This chain is Alpha-amylase (amy), found in Streptomyces griseus.